A 496-amino-acid chain; its full sequence is MDCYRTSPSNSWIYTTVILCIFGFFSMMRPSEPFLIPYLSGPDKNLTSEEMTNEIFPVWTYSYLVLLLPVLVLTDYVRYKPVIILQGISFIITWLLLLFGQGVKTMQVVEFFYGMVTATEVAYYAYIYSVVSPEHYQRVSGYCRSVTLVAYTAGSVLAQLLVSLANLSYFYLNVISLASVSVAFLFSLFLPMPKKSMFFHAKPSREIKKSSSVNPVLEETHEGEAPDCEKQKPTSEIPSTSGKLHKGQLNSLKPRNVTVEVFVQWFQDLKECYSSKRLFYWSLWWAFATAGFNQILNYVQILWDYKSPSQDSSIYNGAVEATATFGGAVAAFAVGYVKVNWDLLGELALAVFSVVNAGSLFLMHYTANIWACYAGYLIFKSSYMLLITIAVFQIAVNLSVERYALVFGINTFIALVIQTIITVIVVDQRGLNLPISIQFLVYGSYFAVIAGIFLMRSMYIIYSTKSQKDVQSPAPSENPDMSHPEEESNAIMSTKL.

The Cytoplasmic portion of the chain corresponds to 1-7; that stretch reads MDCYRTS. A helical membrane pass occupies residues 8 to 28; it reads PSNSWIYTTVILCIFGFFSMM. Residues 29–53 are Extracellular-facing; the sequence is RPSEPFLIPYLSGPDKNLTSEEMTN. An N-linked (GlcNAc...) asparagine glycan is attached at asparagine 45. Residues 54–74 form a helical membrane-spanning segment; sequence EIFPVWTYSYLVLLLPVLVLT. The Cytoplasmic segment spans residues 75–81; that stretch reads DYVRYKP. The helical transmembrane segment at 82-102 threads the bilayer; sequence VIILQGISFIITWLLLLFGQG. Residues 103–110 are Extracellular-facing; that stretch reads VKTMQVVE. Residues 111-131 form a helical membrane-spanning segment; sequence FFYGMVTATEVAYYAYIYSVV. Over 132–144 the chain is Cytoplasmic; that stretch reads SPEHYQRVSGYCR. A helical transmembrane segment spans residues 145–165; it reads SVTLVAYTAGSVLAQLLVSLA. N-linked (GlcNAc...) asparagine glycosylation occurs at asparagine 166. The Extracellular segment spans residues 166–169; the sequence is NLSY. Residues 170-190 form a helical membrane-spanning segment; sequence FYLNVISLASVSVAFLFSLFL. Over 191 to 282 the chain is Cytoplasmic; the sequence is PMPKKSMFFH…YSSKRLFYWS (92 aa). The disordered stretch occupies residues 210–248; that stretch reads SSSVNPVLEETHEGEAPDCEKQKPTSEIPSTSGKLHKGQ. Basic and acidic residues predominate over residues 218–233; sequence EETHEGEAPDCEKQKP. Residues 234–248 show a composition bias toward polar residues; the sequence is TSEIPSTSGKLHKGQ. Residues 283-303 form a helical membrane-spanning segment; it reads LWWAFATAGFNQILNYVQILW. Residues 304–316 are Extracellular-facing; sequence DYKSPSQDSSIYN. Residues 317-337 form a helical membrane-spanning segment; it reads GAVEATATFGGAVAAFAVGYV. The Cytoplasmic portion of the chain corresponds to 338-342; the sequence is KVNWD. A helical membrane pass occupies residues 343–363; that stretch reads LLGELALAVFSVVNAGSLFLM. At 364-375 the chain is on the extracellular side; the sequence is HYTANIWACYAG. The helical transmembrane segment at 376-396 threads the bilayer; that stretch reads YLIFKSSYMLLITIAVFQIAV. At 397 to 405 the chain is on the cytoplasmic side; that stretch reads NLSVERYAL. A helical transmembrane segment spans residues 406–426; the sequence is VFGINTFIALVIQTIITVIVV. Residues 427 to 434 are Extracellular-facing; it reads DQRGLNLP. Residues 435 to 455 traverse the membrane as a helical segment; sequence ISIQFLVYGSYFAVIAGIFLM. Residues 456–496 lie on the Cytoplasmic side of the membrane; it reads RSMYIIYSTKSQKDVQSPAPSENPDMSHPEEESNAIMSTKL. The segment at 469-496 is disordered; the sequence is DVQSPAPSENPDMSHPEEESNAIMSTKL.

The protein belongs to the reduced folate carrier (RFC) transporter (TC 2.A.48) family.

It is found in the membrane. It carries out the reaction thiamine(out) + H(+)(in) = thiamine(in) + H(+)(out). The enzyme catalyses pyridoxine(out) + n H(+)(out) = pyridoxine(in) + n H(+)(in). Its function is as follows. Mediates high affinity thiamine uptake, probably via a proton anti-port mechanism. Has no folate transport activity. Mediates H(+)-dependent pyridoxine transport. In Macaca fascicularis (Crab-eating macaque), this protein is Thiamine transporter 2 (SLC19A3).